The chain runs to 278 residues: HTH-type transcriptional activator RhaS (278 aa).

An HTH araC/xylS-type domain is found at 174 to 272; that stretch reads NQLMAWLEDH…NWSPRDIRQG (99 aa). DNA-binding regions (H-T-H motif) lie at residues 191-212 and 239-262; these read EAVA…KQHT and VTEI…RREF.

Binds DNA as a dimer.

The protein resides in the cytoplasm. Its function is as follows. Activates expression of the rhaBAD and rhaT operons. This chain is HTH-type transcriptional activator RhaS, found in Salmonella heidelberg (strain SL476).